We begin with the raw amino-acid sequence, 434 residues long: 23S rRNA (uracil(1939)-C(5))-methyltransferase RlmD (434 aa).

The region spanning 10-68 (RVTTRQIITVTVNDLDPFGQGVARHQGKALFVSGVLPQEQAEVVLVEDKKQYARAQVKR) is the TRAM domain. Residues cysteine 81, cysteine 87, cysteine 90, and cysteine 162 each contribute to the [4Fe-4S] cluster site. Glutamine 265, phenylalanine 294, asparagine 299, glutamate 315, asparagine 342, and aspartate 363 together coordinate S-adenosyl-L-methionine. The active-site Nucleophile is the cysteine 389.

It belongs to the class I-like SAM-binding methyltransferase superfamily. RNA M5U methyltransferase family. RlmD subfamily.

The catalysed reaction is uridine(1939) in 23S rRNA + S-adenosyl-L-methionine = 5-methyluridine(1939) in 23S rRNA + S-adenosyl-L-homocysteine + H(+). Catalyzes the formation of 5-methyl-uridine at position 1939 (m5U1939) in 23S rRNA. This Klebsiella pneumoniae (strain 342) protein is 23S rRNA (uracil(1939)-C(5))-methyltransferase RlmD.